The following is a 513-amino-acid chain: ATP synthase subunit alpha 2 (513 aa).

ATP is bound at residue 169-176 (GDRQTGKT).

Belongs to the ATPase alpha/beta chains family. In terms of assembly, F-type ATPases have 2 components, CF(1) - the catalytic core - and CF(0) - the membrane proton channel. CF(1) has five subunits: alpha(3), beta(3), gamma(1), delta(1), epsilon(1). CF(0) has three main subunits: a(1), b(2) and c(9-12). The alpha and beta chains form an alternating ring which encloses part of the gamma chain. CF(1) is attached to CF(0) by a central stalk formed by the gamma and epsilon chains, while a peripheral stalk is formed by the delta and b chains.

It is found in the cell inner membrane. It carries out the reaction ATP + H2O + 4 H(+)(in) = ADP + phosphate + 5 H(+)(out). Functionally, produces ATP from ADP in the presence of a proton gradient across the membrane. The alpha chain is a regulatory subunit. The polypeptide is ATP synthase subunit alpha 2 (Shewanella frigidimarina (strain NCIMB 400)).